The sequence spans 434 residues: GTPase Der (434 aa).

2 EngA-type G domains span residues 3-167 and 175-350; these read NIVA…PEIE and PRFA…ESRS. GTP is bound by residues 9–16, 56–60, 119–122, 181–188, 228–232, and 293–296; these read GRPNVGKS, DTGGY, NKVD, GRPNAGKS, DTAGI, and NKWD. The 84-residue stretch at 351-434 folds into the KH-like domain; it reads KKIKTRQFND…VPISIFFRKK (84 aa).

The protein belongs to the TRAFAC class TrmE-Era-EngA-EngB-Septin-like GTPase superfamily. EngA (Der) GTPase family. Associates with the 50S ribosomal subunit.

In terms of biological role, GTPase that plays an essential role in the late steps of ribosome biogenesis. The chain is GTPase Der from Christiangramia forsetii (strain DSM 17595 / CGMCC 1.15422 / KT0803) (Gramella forsetii).